A 180-amino-acid chain; its full sequence is MENFFNQFFENIGEDKNREGLKETPKRVQELWKFLYKGYKEDPKVALKSAYFQGVCDEMIVAQNIEFYSTCEHHLLPFLGNISLGYIPKEKIVGISAIAKLIEIYSRRLQIQERLTTQIAETFDEIIEPRGVIVVCEAKHLCMSMQGVQKQNAIIKTSVLKGLFKKDPKTRAEFMQLLKS.

Zn(2+)-binding residues include cysteine 71, histidine 74, and cysteine 142.

It belongs to the GTP cyclohydrolase I family. In terms of assembly, homomer.

The enzyme catalyses GTP + H2O = 7,8-dihydroneopterin 3'-triphosphate + formate + H(+). It functions in the pathway cofactor biosynthesis; 7,8-dihydroneopterin triphosphate biosynthesis; 7,8-dihydroneopterin triphosphate from GTP: step 1/1. This is GTP cyclohydrolase 1 from Helicobacter pylori (strain Shi470).